The sequence spans 175 residues: Protein her-1 (175 aa).

Positions 1–18 (MRYLPIFVFLGSFGYTET) are cleaved as a signal peptide. 2 N-linked (GlcNAc...) asparagine glycosylation sites follow: N98 and N163.

It localises to the secreted. Its function is as follows. Dictates male development. Probably plays a direct role in cell signaling during C.elegans sex determination. Inhibits the function of tra-2a. In Caenorhabditis elegans, this protein is Protein her-1 (her-1).